The chain runs to 181 residues: Shikimate kinase (181 aa).

An ATP-binding site is contributed by 23–28 (GTGKST). Mg(2+) is bound at residue serine 27. Substrate-binding residues include aspartate 45, arginine 69, and glycine 91. Arginine 129 contributes to the ATP binding site. Arginine 148 provides a ligand contact to substrate.

This sequence belongs to the shikimate kinase family. In terms of assembly, monomer. Mg(2+) serves as cofactor.

The protein resides in the cytoplasm. It carries out the reaction shikimate + ATP = 3-phosphoshikimate + ADP + H(+). It functions in the pathway metabolic intermediate biosynthesis; chorismate biosynthesis; chorismate from D-erythrose 4-phosphate and phosphoenolpyruvate: step 5/7. In terms of biological role, catalyzes the specific phosphorylation of the 3-hydroxyl group of shikimic acid using ATP as a cosubstrate. The protein is Shikimate kinase of Geobacter sulfurreducens (strain ATCC 51573 / DSM 12127 / PCA).